The primary structure comprises 470 residues: Uronate isomerase (470 aa).

Belongs to the metallo-dependent hydrolases superfamily. Uronate isomerase family.

It catalyses the reaction D-glucuronate = D-fructuronate. The catalysed reaction is aldehydo-D-galacturonate = keto-D-tagaturonate. It participates in carbohydrate metabolism; pentose and glucuronate interconversion. This Vibrio vulnificus (strain CMCP6) protein is Uronate isomerase.